Reading from the N-terminus, the 265-residue chain is MSAAPLVGYSSSGSEDEAEAGARVRPGAEGRSRGQSPLPGQRLPVPDSVLHMFPSTEEGPVDDSAKHGGRVRTFPHERGNWATHVYIPYEAREEFLDLLDALLCHAQTYVPRLVRMEAFHLSLSQSVVLRHHWILPFVQALKDRVASFHRFCFTTDQVKIYTNQEKTRTFVGLEVTSGHAHFLDLVAEVDRVMEEFDLSTFYQDPSFHISLAWCVGDARLQMEGPCLQELQGIVDEFEDSEMLLRAYAEQIRCKSGNKFFSMPLK.

The segment at 1 to 67 (MSAAPLVGYS…EGPVDDSAKH (67 aa)) is disordered. The span at 20–32 (AGARVRPGAEGRS) shows a compositional bias: basic and acidic residues. H120 serves as the catalytic Proton acceptor. 120-122 (HLS) is an AMP binding site. Residues Q164, Y202, and 206–210 (SFHIS) contribute to the UMP site. Residues Y202 and 204 to 210 (DPSFHIS) each bind AMP. H208 functions as the Proton donor in the catalytic mechanism.

The protein belongs to the 2H phosphoesterase superfamily. USB1 family. As to quaternary structure, interacts with PLRG1, CDC5L and PRPF19.

It is found in the nucleus. It catalyses the reaction a 3'-end uridylyl-uridine-RNA = a 3'-end 2',3'-cyclophospho-uridine-RNA + uridine. It carries out the reaction a 3'-end uridylyl-adenosine-RNA = a 3'-end 2',3'-cyclophospho-uridine-RNA + adenosine. Functionally, 3'-5' RNA exonuclease that trims the 3' end of oligo(U) and oligo(A) tracts of the pre-U6 small nuclear RNA (snRNA) molecule, leading to the formation of a mature U6 snRNA 3' end-terminated with a 2',3'-cyclic phosphate. Participates in the U6 snRNA 3' end processing that prevents U6 snRNA degradation. In addition also removes uridines from the 3' end of U6atac snRNA and possibly the vault RNA VTRNA1-1. The sequence is that of U6 snRNA phosphodiesterase 1 from Bos taurus (Bovine).